Reading from the N-terminus, the 454-residue chain is GTPase Der (454 aa).

2 consecutive EngA-type G domains span residues 4 to 167 and 188 to 363; these read AIVA…SEDK and LELA…ASWQ. GTP contacts are provided by residues 10–17, 56–60, 121–124, 194–201, 241–245, and 306–309; these read GKPNVGKS, DTPGL, NKTE, GRPNCGKS, DTAGV, and NKWD. Residues 364 to 450 enclose the KH-like domain; that stretch reads KRVTTGTLNQ…PVRLSFVKGK (87 aa).

The protein belongs to the TRAFAC class TrmE-Era-EngA-EngB-Septin-like GTPase superfamily. EngA (Der) GTPase family. In terms of assembly, associates with the 50S ribosomal subunit.

In terms of biological role, GTPase that plays an essential role in the late steps of ribosome biogenesis. The protein is GTPase Der of Orientia tsutsugamushi (strain Ikeda) (Rickettsia tsutsugamushi).